The primary structure comprises 550 residues: Probable importin subunit alpha-A (550 aa).

Over residues 1-30 (MSSRDKQDSRKKEFKKSLDSETARRKREEN) the composition is skewed to basic and acidic residues. A disordered region spans residues 1–34 (MSSRDKQDSRKKEFKKSLDSETARRKREENSIGI). In terms of domain architecture, IBB spans 1–56 (MSSRDKQDSRKKEFKKSLDSETARRKREENSIGIRKNAREELMLKRRGIVQPNPST). ARM repeat units follow at residues 116–155 (YPPIDQVIECGIIPKLNQLLQCNNPKVQFESAWALTNIAS), 158–198 (NRQT…NIAG), 201–241 (VDSR…KIGL), 256–297 (KPQP…YLCD), 300–339 (NTKIQAVIDSGVVPRLVKLLEYPDSIVFTPALRAVGNIVT), 342–381 (SSQTQIVIDNNGVELITRLLAVQKKSIRKESCWALSNITA), 385–424 (SQIDVVVSNPKTVTTLISLLSHSEHDIKREACWALSNSTN), and 428–467 (TKSIQTLVRHNILKHFIDLLNSQDLVILKIVLEGLINIIK).

Belongs to the importin alpha family. In terms of assembly, forms a complex with tnpo/importin subunit beta.

The protein resides in the cytoplasm. It localises to the nucleus envelope. In terms of biological role, functions in nuclear protein import via a substrate-importin alpha-beta transport complex that passes though the nuclear pore complexes (NPC). Binds specifically and directly to substrates containing either a simple or bipartite NLS motif. In Dictyostelium discoideum (Social amoeba), this protein is Probable importin subunit alpha-A.